Reading from the N-terminus, the 475-residue chain is MAIKISDAPFSKRVEKGLQDGFMRQAVSSAQERLKTSKGSAEKELGNWEEWRTLAEEIRSHTLNHIDFYLHQLSENVEKAGGHVYFAQTAEEANQYIKEIVSSKEAQKVVKSKSMVTEEISMNKALEDIGCEVIETDLGEYILQIDDHDPPSHIVAPALHKNKEQIRDTFKARKGYTKSENPQELTLFAREQLRKEFLSADVGITGCNFAVAESGSISLVTNEGNARLATALPKTHIAVMGMERIVPTWEELDILVSMLCRSAVGQKLTSYVTGLTGPREDGDADGPEEFHLVIVDNGRSNILGTEFQAALHCIRCAACINVCPVYRHVGGHSYGSIYPGPIGAVLTPLLEGYEDHKELPYASSLCAACTDACPVKIPLHELLIKHRRVIAEQKRTARTEALAMKGFGIGASSPMLYKAGTKVVPFLLFPFVKDGAIPKGPGPLKGWTDVRHLPAPAKERFRDWFKARQKEGAHD.

2 4Fe-4S ferredoxin-type domains span residues 304–334 (GTEFQAALHCIRCAACINVCPVYRHVGGHSY) and 353–382 (YEDHKELPYASSLCAACTDACPVKIPLHEL). Residues Cys313, Cys316, Cys319, Cys323, Cys366, Cys369, and Cys373 each coordinate [4Fe-4S] cluster.

This sequence belongs to the LutB/YkgF family.

Is involved in L-lactate degradation and allows cells to grow with lactate as the sole carbon source. Has probably a role as an electron transporter during oxidation of L-lactate. This Shouchella clausii (strain KSM-K16) (Alkalihalobacillus clausii) protein is Lactate utilization protein B.